The sequence spans 278 residues: ATP synthase subunit a (278 aa).

The next 6 membrane-spanning stretches (helical) occupy residues 43-63 (TWHI…LWIF), 104-124 (IAPL…MDMI), 148-168 (DVNI…FYSI), 191-211 (IPVN…SLAL), 222-242 (LIFI…TLGV), and 249-269 (LIFH…LTIV).

This sequence belongs to the ATPase A chain family. F-type ATPases have 2 components, CF(1) - the catalytic core - and CF(0) - the membrane proton channel. CF(1) has five subunits: alpha(3), beta(3), gamma(1), delta(1), epsilon(1). CF(0) has three main subunits: a(1), b(2) and c(9-12). The alpha and beta chains form an alternating ring which encloses part of the gamma chain. CF(1) is attached to CF(0) by a central stalk formed by the gamma and epsilon chains, while a peripheral stalk is formed by the delta and b chains.

The protein resides in the cell inner membrane. Its function is as follows. Key component of the proton channel; it plays a direct role in the translocation of protons across the membrane. The sequence is that of ATP synthase subunit a from Shewanella baltica (strain OS185).